Here is a 309-residue protein sequence, read N- to C-terminus: Tagatose-6-phosphate kinase (309 aa).

This sequence belongs to the carbohydrate kinase PfkB family. LacC subfamily.

It carries out the reaction D-tagatofuranose 6-phosphate + ATP = D-tagatofuranose 1,6-bisphosphate + ADP + H(+). Its pathway is carbohydrate metabolism; D-tagatose 6-phosphate degradation; D-glyceraldehyde 3-phosphate and glycerone phosphate from D-tagatose 6-phosphate: step 1/2. This is Tagatose-6-phosphate kinase from Streptococcus pneumoniae serotype 4 (strain ATCC BAA-334 / TIGR4).